A 258-amino-acid polypeptide reads, in one-letter code: UPF0246 protein ABO_1338 (258 aa).

This sequence belongs to the UPF0246 family.

The chain is UPF0246 protein ABO_1338 from Alcanivorax borkumensis (strain ATCC 700651 / DSM 11573 / NCIMB 13689 / SK2).